We begin with the raw amino-acid sequence, 200 residues long: Large ribosomal subunit protein uL4c (200 aa).

The segment at 45–71 (RAEIRGGGRKPWKQKGTGRARAGSRRS) is disordered. Residues 51–68 (GGRKPWKQKGTGRARAGS) show a composition bias toward basic residues.

The protein belongs to the universal ribosomal protein uL4 family. In terms of assembly, part of the 50S ribosomal subunit.

It is found in the plastid. The protein resides in the chloroplast. Probably binds the 23S rRNA. The sequence is that of Large ribosomal subunit protein uL4c (rpl4) from Cyanidioschyzon merolae (strain NIES-3377 / 10D) (Unicellular red alga).